The sequence spans 147 residues: Large ribosomal subunit protein uL13 (147 aa).

It belongs to the universal ribosomal protein uL13 family. Part of the 50S ribosomal subunit.

In terms of biological role, this protein is one of the early assembly proteins of the 50S ribosomal subunit, although it is not seen to bind rRNA by itself. It is important during the early stages of 50S assembly. The sequence is that of Large ribosomal subunit protein uL13 from Nocardia farcinica (strain IFM 10152).